The following is a 378-amino-acid chain: Ribosomal RNA large subunit methyltransferase G (378 aa).

The protein belongs to the methyltransferase superfamily. RlmG family.

It localises to the cytoplasm. It catalyses the reaction guanosine(1835) in 23S rRNA + S-adenosyl-L-methionine = N(2)-methylguanosine(1835) in 23S rRNA + S-adenosyl-L-homocysteine + H(+). Functionally, specifically methylates the guanine in position 1835 (m2G1835) of 23S rRNA. This is Ribosomal RNA large subunit methyltransferase G from Escherichia coli O9:H4 (strain HS).